Here is a 389-residue protein sequence, read N- to C-terminus: Choline/ethanolaminephosphotransferase 1 (389 aa).

The chain crosses the membrane as a helical span at residues 40-60 (VFPLWMPPNMITLMGFMFLVT). N48 is a CDP-choline binding site. 2 residues coordinate Mg(2+): D95 and D98. R103 contributes to the CDP-choline binding site. D116 lines the Mg(2+) pocket. The active-site Proton acceptor is the H117. D120 lines the Mg(2+) pocket. 7 consecutive transmembrane segments (helical) span residues 141–161 (TFWFWVISAIPFYGATWEHYF), 176–196 (GLALIFVSHFFTAIVGAEWWA), 221–241 (VLYMMIAFAVIPTVAFNVTNV), 252–272 (MVLALAMLYPFVVLLGGVLIW), 280–300 (LIATYPHLVVLGTGLAFGFLV), 322–344 (SLLYLPFALANALTARLNAGVPL), and 350–370 (VLLGYCIFTVSLYLHFATSVI).

Belongs to the CDP-alcohol phosphatidyltransferase class-I family. Mg(2+) is required as a cofactor. The cofactor is Mn(2+).

It localises to the membrane. The catalysed reaction is CDP-ethanolamine + a 1,2-diacyl-sn-glycerol = a 1,2-diacyl-sn-glycero-3-phosphoethanolamine + CMP + H(+). The enzyme catalyses CDP-choline + a 1,2-diacyl-sn-glycerol = a 1,2-diacyl-sn-glycero-3-phosphocholine + CMP + H(+). It participates in phospholipid metabolism; phosphatidylethanolamine biosynthesis; phosphatidylethanolamine from ethanolamine: step 3/3. Its pathway is phospholipid metabolism; phosphatidylcholine biosynthesis; phosphatidylcholine from phosphocholine: step 2/2. In terms of biological role, catalyzes both phosphatidylcholine and phosphatidylethanolamine biosynthesis from CDP-choline and CDP-ethanolamine, respectively. Has a higher cholinephosphotransferase activity than ethanolaminephosphotransferase activity. This chain is Choline/ethanolaminephosphotransferase 1 (AAPT1), found in Arabidopsis thaliana (Mouse-ear cress).